We begin with the raw amino-acid sequence, 513 residues long: Putative ribose/galactose/methyl galactoside import ATP-binding protein 2 (513 aa).

2 ABC transporter domains span residues 24–260 and 270–510; these read LAAD…VGRE and VPIG…VMDL. 56–63 contacts ATP; sequence GENGAGKS.

The protein belongs to the ABC transporter superfamily. Carbohydrate importer 2 (CUT2) (TC 3.A.1.2) family.

The protein localises to the cell inner membrane. The enzyme catalyses D-ribose(out) + ATP + H2O = D-ribose(in) + ADP + phosphate + H(+). It carries out the reaction D-galactose(out) + ATP + H2O = D-galactose(in) + ADP + phosphate + H(+). Functionally, part of an ABC transporter complex involved in carbohydrate import. Could be involved in ribose, galactose and/or methyl galactoside import. Responsible for energy coupling to the transport system. The sequence is that of Putative ribose/galactose/methyl galactoside import ATP-binding protein 2 from Agrobacterium fabrum (strain C58 / ATCC 33970) (Agrobacterium tumefaciens (strain C58)).